The chain runs to 411 residues: MPSVLWILFDGGGDRPNGGKTPFHVAFKPTIDYLTSLGSCGLLDPISPGVRPGSDTAHLALFGYDPYKYYTGRGAFEALGAGIELRPGDVAFRTNLATVDSSGVVIDRRAGRYIAPEETRAVEEVMAKIGDEVAKRYGVEVVYKSTVEHRGVLVLRGPVSHKVSDTDPHKVGMPVAKAAPLGNDREAALTAEVVNYITARFTEAAGGLEINKARAASGRPPINAILLRGGGYMPAIEPVAEKYRVKAAAIAGVALIRGVAKAVGMDVYTAQGLGGTKDDVFDHAVKLAVELMGKYDVVFLHVKGTDSTSHDGDFQGKVAVIERLDKALAPYLDHLLKNYFIVTSDHATPVSIREHTGEPVPLTLYGPDVVPDDVAKFSELTCWRGALGRLRGIDIMPILASYLGLSEKFGE.

This sequence belongs to the BPG-independent phosphoglycerate mutase family. A-PGAM subfamily.

The enzyme catalyses (2R)-2-phosphoglycerate = (2R)-3-phosphoglycerate. It functions in the pathway carbohydrate degradation; glycolysis; pyruvate from D-glyceraldehyde 3-phosphate: step 3/5. Functionally, catalyzes the interconversion of 2-phosphoglycerate and 3-phosphoglycerate. The protein is 2,3-bisphosphoglycerate-independent phosphoglycerate mutase of Pyrobaculum calidifontis (strain DSM 21063 / JCM 11548 / VA1).